The following is a 545-amino-acid chain: Chaperonin GroEL (545 aa).

ATP contacts are provided by residues 30–33 (TLGP), lysine 51, 87–91 (DGTTT), glycine 415, and aspartate 496.

This sequence belongs to the chaperonin (HSP60) family. Forms a cylinder of 14 subunits composed of two heptameric rings stacked back-to-back. Interacts with the co-chaperonin GroES.

It is found in the cytoplasm. The catalysed reaction is ATP + H2O + a folded polypeptide = ADP + phosphate + an unfolded polypeptide.. Functionally, together with its co-chaperonin GroES, plays an essential role in assisting protein folding. The GroEL-GroES system forms a nano-cage that allows encapsulation of the non-native substrate proteins and provides a physical environment optimized to promote and accelerate protein folding. In Haemophilus influenzae (strain 86-028NP), this protein is Chaperonin GroEL.